The following is a 662-amino-acid chain: UvrABC system protein B (662 aa).

The region spanning 31 to 188 (DNIEGGEKAQ…NDLVDIQFER (158 aa)) is the Helicase ATP-binding domain. 44–51 (GATGTGKT) serves as a coordination point for ATP. The Beta-hairpin motif lies at 97 to 120 (YYDYYQPEAYVPSSDTYIEKDSSV). The Helicase C-terminal domain occupies 435 to 601 (QIDDLLGEIN…TIKKEIRDLI (167 aa)). One can recognise a UVR domain in the interval 626 to 661 (KDMIKKLEGQMQEAAGLLDFELAAQIRDMILEIKAM).

It belongs to the UvrB family. In terms of assembly, forms a heterotetramer with UvrA during the search for lesions. Interacts with UvrC in an incision complex.

It localises to the cytoplasm. Functionally, the UvrABC repair system catalyzes the recognition and processing of DNA lesions. A damage recognition complex composed of 2 UvrA and 2 UvrB subunits scans DNA for abnormalities. Upon binding of the UvrA(2)B(2) complex to a putative damaged site, the DNA wraps around one UvrB monomer. DNA wrap is dependent on ATP binding by UvrB and probably causes local melting of the DNA helix, facilitating insertion of UvrB beta-hairpin between the DNA strands. Then UvrB probes one DNA strand for the presence of a lesion. If a lesion is found the UvrA subunits dissociate and the UvrB-DNA preincision complex is formed. This complex is subsequently bound by UvrC and the second UvrB is released. If no lesion is found, the DNA wraps around the other UvrB subunit that will check the other stand for damage. This Streptococcus sanguinis (strain SK36) protein is UvrABC system protein B.